A 356-amino-acid polypeptide reads, in one-letter code: tRNA N6-adenosine threonylcarbamoyltransferase (356 aa).

Fe cation-binding residues include His-115 and His-119. Substrate-binding positions include 138-142, Asp-171, Gly-184, and Asn-283; that span reads LVSGG. Fe cation is bound at residue Asp-311.

It belongs to the KAE1 / TsaD family. It depends on Fe(2+) as a cofactor.

The protein resides in the cytoplasm. The enzyme catalyses L-threonylcarbamoyladenylate + adenosine(37) in tRNA = N(6)-L-threonylcarbamoyladenosine(37) in tRNA + AMP + H(+). In terms of biological role, required for the formation of a threonylcarbamoyl group on adenosine at position 37 (t(6)A37) in tRNAs that read codons beginning with adenine. Is involved in the transfer of the threonylcarbamoyl moiety of threonylcarbamoyl-AMP (TC-AMP) to the N6 group of A37, together with TsaE and TsaB. TsaD likely plays a direct catalytic role in this reaction. This chain is tRNA N6-adenosine threonylcarbamoyltransferase, found in Prochlorococcus marinus (strain AS9601).